The primary structure comprises 413 residues: Putative glutamate--cysteine ligase 2 (413 aa).

The tract at residues 392–413 is disordered; the sequence is GGVCALSTPQGDPLPGWAERLH.

This sequence belongs to the glutamate--cysteine ligase type 2 family. YbdK subfamily.

The enzyme catalyses L-cysteine + L-glutamate + ATP = gamma-L-glutamyl-L-cysteine + ADP + phosphate + H(+). Its function is as follows. ATP-dependent carboxylate-amine ligase which exhibits weak glutamate--cysteine ligase activity. The protein is Putative glutamate--cysteine ligase 2 of Bordetella bronchiseptica (strain ATCC BAA-588 / NCTC 13252 / RB50) (Alcaligenes bronchisepticus).